The sequence spans 316 residues: Methionyl-tRNA formyltransferase (316 aa).

109-112 contacts (6S)-5,6,7,8-tetrahydrofolate; it reads SLLP.

This sequence belongs to the Fmt family.

It catalyses the reaction L-methionyl-tRNA(fMet) + (6R)-10-formyltetrahydrofolate = N-formyl-L-methionyl-tRNA(fMet) + (6S)-5,6,7,8-tetrahydrofolate + H(+). Its function is as follows. Attaches a formyl group to the free amino group of methionyl-tRNA(fMet). The formyl group appears to play a dual role in the initiator identity of N-formylmethionyl-tRNA by promoting its recognition by IF2 and preventing the misappropriation of this tRNA by the elongation apparatus. The polypeptide is Methionyl-tRNA formyltransferase (Nitrosomonas eutropha (strain DSM 101675 / C91 / Nm57)).